A 382-amino-acid chain; its full sequence is 1-deoxy-D-xylulose 5-phosphate reductoisomerase (382 aa).

Residues Thr-10, Gly-11, Ser-12, Ile-13, Gly-36, and Asn-122 each coordinate NADPH. Position 123 (Lys-123) interacts with 1-deoxy-D-xylulose 5-phosphate. NADPH is bound at residue Glu-124. Asp-148 contacts Mn(2+). 1-deoxy-D-xylulose 5-phosphate contacts are provided by Ser-149, Glu-150, Ser-174, and His-197. Residue Glu-150 participates in Mn(2+) binding. NADPH is bound at residue Gly-203. 1-deoxy-D-xylulose 5-phosphate is bound by residues Ser-210, Asn-215, Lys-216, and Glu-219. Glu-219 is a binding site for Mn(2+).

Belongs to the DXR family. It depends on Mg(2+) as a cofactor. The cofactor is Mn(2+).

It catalyses the reaction 2-C-methyl-D-erythritol 4-phosphate + NADP(+) = 1-deoxy-D-xylulose 5-phosphate + NADPH + H(+). It functions in the pathway isoprenoid biosynthesis; isopentenyl diphosphate biosynthesis via DXP pathway; isopentenyl diphosphate from 1-deoxy-D-xylulose 5-phosphate: step 1/6. Functionally, catalyzes the NADPH-dependent rearrangement and reduction of 1-deoxy-D-xylulose-5-phosphate (DXP) to 2-C-methyl-D-erythritol 4-phosphate (MEP). The polypeptide is 1-deoxy-D-xylulose 5-phosphate reductoisomerase (Chlorobium chlorochromatii (strain CaD3)).